A 492-amino-acid polypeptide reads, in one-letter code: MNMPLLLLIAIVVVSLSHGNGEQTDLTRETFPAGFVFGTASSAYQVEGNALQYGRGPCIWDTFLMQPGVTPDNSTANVTVDEYHRYMDDVDNMVRVGFDAYRFSISWSRIFPSGLGKINKDGVDYYHRLIDYMLANNIIPYVVLYHYDLPQVLHDQYKGWLHPRIVRDFVRFADFCFKTYGHKVKNWFTINEPRMMANHGYGDGFFPPGRCTGCQPGGNSATEPYIAAHNLLLSHAAAVRTYRDKYQAIQKGKIGILLDFVWYEPLTDKEEDHAAAHRAREFTLGWYLHPITYGHYPETMQNAVKERLPNFTREQSEMIKGSADYIAINHYTTYYVSHHVNKTSISYLNDWDVKISYERNGVPIGKQAYSNWLYVVPWGIYKAVMHVKEKYKDPIIIIGENGIDQPGNETLPGALYDFFRIQYFDQYLHELKRAIKDGARVTGYFAWSLLDNFEWRLGFTSKFGIVYVDRSTFTRYPKDSTRWFRKMIKSEV.

An N-terminal signal peptide occupies residues 1-21 (MNMPLLLLIAIVVVSLSHGNG). Gln45 is an a beta-D-glucoside binding site. N-linked (GlcNAc...) asparagine glycans are attached at residues Asn73 and Asn77. Residues His146 and 191–192 (NE) each bind a beta-D-glucoside. Glu192 serves as the catalytic Proton donor. Residues Cys211 and Cys214 are joined by a disulfide bond. N-linked (GlcNAc...) asparagine glycosylation occurs at Asn310. Residue Tyr331 coordinates a beta-D-glucoside. Residue Asn341 is glycosylated (N-linked (GlcNAc...) asparagine). Residue Glu400 participates in a beta-D-glucoside binding. The Nucleophile role is filled by Glu400. Residue Asn408 is glycosylated (N-linked (GlcNAc...) asparagine). A beta-D-glucoside-binding positions include Trp447, 454–455 (EW), and Phe463.

This sequence belongs to the glycosyl hydrolase 1 family.

It catalyses the reaction Hydrolysis of terminal, non-reducing beta-D-glucosyl residues with release of beta-D-glucose.. The sequence is that of Beta-glucosidase 38 (BGLU38) from Oryza sativa subsp. japonica (Rice).